The following is a 174-amino-acid chain: Adenine phosphoribosyltransferase (174 aa).

The protein belongs to the purine/pyrimidine phosphoribosyltransferase family. As to quaternary structure, homodimer.

The protein localises to the cytoplasm. The enzyme catalyses AMP + diphosphate = 5-phospho-alpha-D-ribose 1-diphosphate + adenine. It functions in the pathway purine metabolism; AMP biosynthesis via salvage pathway; AMP from adenine: step 1/1. Its function is as follows. Catalyzes a salvage reaction resulting in the formation of AMP, that is energically less costly than de novo synthesis. This Photobacterium profundum (strain SS9) protein is Adenine phosphoribosyltransferase.